The sequence spans 159 residues: Cytochrome P450 monooxygenase aunB (159 aa).

Cys-134 contacts heme.

Belongs to the cytochrome P450 family. Heme serves as cofactor.

The catalysed reaction is 2 fonsecin B + NADPH + O2 + H(+) = aurasperone B + NADP(+) + 2 H2O. It carries out the reaction 2 rubrofusarin B + NADPH + O2 + H(+) = aurasperone A + NADP(+) + 2 H2O. Its pathway is secondary metabolite biosynthesis. Functionally, cytochrome P450 monooxygenase; part of the gene cluster that mediates the biosynthesis of aurasperone B, a dimeric gamma-naphthopyrone. The first step in the biosynthesis of aurasperone B is the production of gamma-naphthopyrone precursor YWA1 by the non-reducing polyketide synthase albA, via condensation of one acetyl-CoA starter unit with 6 malonyl-CoA units. YWA1 is then methylated by aunE at position C-6 to yield foncesin which is further methylated at position C-8 by aunD to produce fonsecin B. A key enzyme in the biosynthetic pathway is the cytochrome P450 monooxygenase aunB which catalyzes the oxidative dimerization of fonsecin B to aurasperone B. AunB also catalyzes the oxidative dimerization of rubrofusarin B into aurasperone A. This is Cytochrome P450 monooxygenase aunB from Aspergillus niger (strain ATCC 1015 / CBS 113.46 / FGSC A1144 / LSHB Ac4 / NCTC 3858a / NRRL 328 / USDA 3528.7).